Consider the following 622-residue polypeptide: Low affinity potassium transport system protein Kup (622 aa).

Helical transmembrane passes span Leu9 to Leu29, Val49 to Ile69, Val101 to Pro121, Pro137 to Ile157, Gly163 to Leu183, Val213 to Ala233, Trp247 to Leu267, Pro276 to Ala296, Ile337 to Phe357, Leu363 to Ala383, Leu395 to Asn415, and Ile419 to Thr439.

This sequence belongs to the HAK/KUP transporter (TC 2.A.72) family.

The protein localises to the cell inner membrane. It carries out the reaction K(+)(in) + H(+)(in) = K(+)(out) + H(+)(out). Its function is as follows. Responsible for the low-affinity transport of potassium into the cell. Likely operates as a K(+):H(+) symporter. This chain is Low affinity potassium transport system protein Kup, found in Klebsiella pneumoniae subsp. pneumoniae (strain ATCC 700721 / MGH 78578).